A 90-amino-acid polypeptide reads, in one-letter code: Putative regulatory protein Cbei_1140 (90 aa).

This sequence belongs to the RemA family.

The sequence is that of Putative regulatory protein Cbei_1140 from Clostridium beijerinckii (strain ATCC 51743 / NCIMB 8052) (Clostridium acetobutylicum).